A 509-amino-acid polypeptide reads, in one-letter code: UDP-N-acetylmuramyl-tripeptide synthetase (509 aa).

Serine 30 is a binding site for UDP-N-acetyl-alpha-D-muramoyl-L-alanyl-D-glutamate. Residue 111-117 (GTDGKTT) participates in ATP binding. UDP-N-acetyl-alpha-D-muramoyl-L-alanyl-D-glutamate is bound by residues 155–156 (ST), threonine 182, and arginine 192. An N6-carboxylysine modification is found at lysine 224.

Belongs to the MurCDEF family. MurE subfamily. Carboxylation is probably crucial for Mg(2+) binding and, consequently, for the gamma-phosphate positioning of ATP.

It is found in the cytoplasm. It functions in the pathway cell wall biogenesis; peptidoglycan biosynthesis. Functionally, catalyzes the addition of an amino acid to the nucleotide precursor UDP-N-acetylmuramoyl-L-alanyl-D-glutamate (UMAG) in the biosynthesis of bacterial cell-wall peptidoglycan. This chain is UDP-N-acetylmuramyl-tripeptide synthetase, found in Roseiflexus sp. (strain RS-1).